A 158-amino-acid chain; its full sequence is Coenzyme F420 hydrogenase subunit delta (158 aa).

The protein belongs to the peptidase A31 family.

The chain is Coenzyme F420 hydrogenase subunit delta (frhD) from Methanothermobacter thermautotrophicus (strain ATCC 29096 / DSM 1053 / JCM 10044 / NBRC 100330 / Delta H) (Methanobacterium thermoautotrophicum).